The following is a 552-amino-acid chain: MDTLTHVLVLPEALERLDSPSIIIPRTANTSEEVVPYAHLTDLTQSLQHDLATLGISVGSKVAIVLPNGLAFVTVLLATIRQRAISAPIHPNSTREECKQIFSLMTPDLVAVMPSEASPAAAAVLAAQDLGLPVASCHRYPQSGRLSFCLALKLVNRGDETSNPSPCMVYSRDHVLAEDKVLELFTSGTTGAPKSVQLTHTNILVAMRIITSAHKITFKDRSFLITPLFHIIGIAGSLLPTLFTGGCAVIPASLPATFWQDCQDYSITWYHAVPTLHHLLLSFPMPKGGVPATLRFIRSGGSDMSLDLFNRLQKLGVPLLEVYGMTETAPAIFCNPFPVTETSTAIKRHPGQYPIPDAVDVMILPPERAPGLEPNGDLDGIENTEPVARLTKELGVKGEICLRGKNIMAGYTNNPAANREAFLPNGFFRTGDLGVIKPRQYLALIGRVKEIINKGGEKISPAEIEHVARLHDQVNDAACFRISDEIYGEVIGLAITAKSAITITAVKKHMRHHVVMFKVPDKVLLVQEIPYNRTGKPRRTLLSEMYDRGELA.

183–194 (ELFTSGTTGAPK) lines the AMP pocket. The segment at 463 to 536 (EIEHVARLHD…QEIPYNRTGK (74 aa)) is AMP-binding.

This sequence belongs to the ATP-dependent AMP-binding enzyme family.

The protein operates within mycotoxin biosynthesis. Functionally, acyl-CoA synthetase; part of the gene cluster that mediates the biosynthesis of fumonisins B1 (FB1), B2 (FB2), B3 (FB3), and B4 (FB4), which are carcinogenic mycotoxins. Within the pathway, FUM10 is involved the addition of the tricarballylic moieties to the carbon backbone. FUM10 catalyzes the CoA activation of citrate to form tricarballylic acid. The biosynthesis starts with the FUM1-catalyzed carbon chain assembly from one molecule of acetyl-CoA, eight molecules of malonyl-CoA, and two molecules of methionine (in S-adenosyl form). The C18 polyketide chain is released from the enzyme by a nucleophilic attack of a carbanion, which is derived from R-carbon of alanine by decarboxylation, on the carbonyl carbon of polyketide acyl chain. This step is catalyzed by the pyridoxal 5'-phosphate-dependent aminoacyl transferase FUM8. The resultant 3-keto intermediate is then stereospecifically reduced to a 3-hydroxyl product by reductase FUM13. Subsequent oxidations at C-10 by the cytochrome P450 monooxygenase FUM2, C-14 and C-15 by FUM6, FUM12 or FUM15, tricarballylic esterification of the hydroxyl groups on C-14 and C-15 by acyltransferase FUM14, and C-5 hydroxylation by 2-keto-glutarate-dependent dioxygenase FUM3 furnish the biosynthesis of fumonisins. The tricarballylic moieties are most likely derived from the citric acid cycle, and their addition to the carbon backbone may involve FUM7, FUM10, FUM11 and FUM14. This Gibberella moniliformis (strain M3125 / FGSC 7600) (Maize ear and stalk rot fungus) protein is Acyl-CoA synthetase FUM10.